The sequence spans 331 residues: Ketol-acid reductoisomerase (NADP(+)) (331 aa).

A KARI N-terminal Rossmann domain is found at 2 to 181; the sequence is TKVYYEDAVK…GATRAGVIET (180 aa). Residues 25–28, Arg48, Ser52, and 82–85 each bind NADP(+); these read YGSQ and DETQ. His107 is a catalytic residue. Gly133 provides a ligand contact to NADP(+). One can recognise a KARI C-terminal knotted domain in the interval 182–327; it reads TFKEETETDL…AELREMMPFV (146 aa). The Mg(2+) site is built by Asp190, Glu194, Glu226, and Glu230. Residue Ser251 participates in substrate binding.

The protein belongs to the ketol-acid reductoisomerase family. Mg(2+) serves as cofactor.

It catalyses the reaction (2R)-2,3-dihydroxy-3-methylbutanoate + NADP(+) = (2S)-2-acetolactate + NADPH + H(+). It carries out the reaction (2R,3R)-2,3-dihydroxy-3-methylpentanoate + NADP(+) = (S)-2-ethyl-2-hydroxy-3-oxobutanoate + NADPH + H(+). It participates in amino-acid biosynthesis; L-isoleucine biosynthesis; L-isoleucine from 2-oxobutanoate: step 2/4. It functions in the pathway amino-acid biosynthesis; L-valine biosynthesis; L-valine from pyruvate: step 2/4. In terms of biological role, involved in the biosynthesis of branched-chain amino acids (BCAA). Catalyzes an alkyl-migration followed by a ketol-acid reduction of (S)-2-acetolactate (S2AL) to yield (R)-2,3-dihydroxy-isovalerate. In the isomerase reaction, S2AL is rearranged via a Mg-dependent methyl migration to produce 3-hydroxy-3-methyl-2-ketobutyrate (HMKB). In the reductase reaction, this 2-ketoacid undergoes a metal-dependent reduction by NADPH to yield (R)-2,3-dihydroxy-isovalerate. The chain is Ketol-acid reductoisomerase (NADP(+)) from Listeria innocua serovar 6a (strain ATCC BAA-680 / CLIP 11262).